We begin with the raw amino-acid sequence, 470 residues long: Fumarate reductase 1 (470 aa).

Position 6 to 20 (6 to 20 (VVVIGTGLAGLAAAN)) interacts with FAD. Ser-66 bears the Phosphoserine mark. Catalysis depends on residues His-249 and Arg-272.

The protein belongs to the FAD-dependent oxidoreductase 2 family. FRD/SDH subfamily. FAD serves as cofactor. The N-terminus is blocked.

It is found in the cytoplasm. The enzyme catalyses succinate + NAD(+) = fumarate + NADH + H(+). Functionally, irreversibly catalyzes the reduction of fumarate to succinate. Together with the second isozyme of soluble fumarate reductase (OSM1), essential for anaerobic growth. Involved in maintaining redox balance. Reduction of fumarate is the main source of succinate during fermentation, and under anaerobic conditions, the formation of succinate is strictly required for the reoxidation of FADH(2). This Saccharomyces cerevisiae (strain ATCC 204508 / S288c) (Baker's yeast) protein is Fumarate reductase 1 (FRD1).